Consider the following 205-residue polypeptide: Cytochrome c biogenesis ATP-binding export protein CcmA 1 (205 aa).

One can recognise an ABC transporter domain in the interval 2 to 205; that stretch reads LEARDLYCER…LALTGGEAGL (204 aa). 34–41 is an ATP binding site; the sequence is GGNGAGKT.

The protein belongs to the ABC transporter superfamily. CcmA exporter (TC 3.A.1.107) family. In terms of assembly, the complex is composed of two ATP-binding proteins (CcmA) and two transmembrane proteins (CcmB).

The protein resides in the cell inner membrane. It carries out the reaction heme b(in) + ATP + H2O = heme b(out) + ADP + phosphate + H(+). Functionally, part of the ABC transporter complex CcmAB involved in the biogenesis of c-type cytochromes; once thought to export heme, this seems not to be the case, but its exact role is uncertain. Responsible for energy coupling to the transport system. This is Cytochrome c biogenesis ATP-binding export protein CcmA 1 from Salmonella paratyphi A (strain ATCC 9150 / SARB42).